A 595-amino-acid polypeptide reads, in one-letter code: Tripeptidyl-peptidase SED3 (595 aa).

An N-terminal signal peptide occupies residues 1–22 (MLLPWQQTIIILFLGVNSLVAA). The propeptide at 23-201 (LRNTYRTVEE…KLETIQLSSN (179 aa)) is removed in mature form. N207, N264, and N278 each carry an N-linked (GlcNAc...) asparagine glycan. One can recognise a Peptidase S53 domain in the interval 209 to 595 (TITPQCLRDI…EILAKIVRDL (387 aa)). Catalysis depends on charge relay system residues E285 and D289. N298 and N365 each carry an N-linked (GlcNAc...) asparagine glycan. The active-site Charge relay system is the S499. The Ca(2+) site is built by D541 and I542. Residues N554, N557, and N569 are each glycosylated (N-linked (GlcNAc...) asparagine). The Ca(2+) site is built by G573 and D575.

Ca(2+) serves as cofactor.

It localises to the secreted. The protein localises to the extracellular space. The catalysed reaction is Release of an N-terminal tripeptide from a polypeptide.. Secreted tripeptidyl-peptidase which degrades proteins at acidic pHs and is involved in virulence. This is Tripeptidyl-peptidase SED3 (SED3) from Arthroderma otae (strain ATCC MYA-4605 / CBS 113480) (Microsporum canis).